Reading from the N-terminus, the 359-residue chain is Oxopyrrolidines biosynthesis cluster protein G (359 aa).

A disordered region spans residues 1–32 (MDHLRDSLLSSLPRDSPSIGAMDYARRDREST). Over residues 7-18 (SLLSSLPRDSPS) the composition is skewed to low complexity.

Part of the gene cluster that mediates the biosynthesis of oxopyrrolidines, polyketide-amino acid hybrid compounds with feature structures of tetramic acid. Does not seem to play a role in oxopyrrolidines A and B biosynthesis. The chain is Oxopyrrolidines biosynthesis cluster protein G from Penicillium oxalicum (strain 114-2 / CGMCC 5302) (Penicillium decumbens).